The primary structure comprises 530 residues: Chaperone Ric-8A (530 aa).

A Phosphoserine; by CK2 modification is found at Ser435. Thr440 carries the post-translational modification Phosphothreonine; by CK2. At Thr442 the chain carries Phosphothreonine. 4 positions are modified to phosphoserine: Ser501, Ser522, Ser523, and Ser527.

Belongs to the synembryn family. As to quaternary structure, interacts with GDP-bound G alpha proteins GNAI1, GNAO1 and GNAQ, and with GNA13 with lower affinity. Does not interact with G-alpha proteins when they are in complex with subunits beta and gamma. Interacts (via C-terminus) with RGS14; the interaction stimulates the dissociation of the complex between RGS14 and the active GTP-bound form of GNAI1. Interacts with NCS1; interaction is favored in the absence of Ca(2+) and myristoylation of NCS1 is not required. Phosphorylated at Ser-435 and Thr-440 by CK2, stabilizing its interface with G alpha proteins.

The protein resides in the cytoplasm. It is found in the cell cortex. Chaperone that specifically binds and folds nascent G alpha proteins prior to G protein heterotrimer formation, promoting their stability and activity: folds GNAI1, GNAO1, GNA13 and GNAQ. Does not fold G(s) G-alpha proteins GNAS nor GNAL. Also acts as a guanine nucleotide exchange factor (GEF) for G alpha proteins by stimulating exchange of bound GDP for free GTP. Involved in regulation of microtubule pulling forces during mitotic movement of chromosomes by stimulating G(i)-alpha protein (GNAI1), possibly leading to release G(i)-alpha-GTP and NuMA proteins from the NuMA-GPSM2-G(i)-alpha-GDP complex. Also acts as an activator for G(q)-alpha (GNAQ) protein by enhancing the G(q)-coupled receptor-mediated ERK activation. This is Chaperone Ric-8A from Rattus norvegicus (Rat).